The primary structure comprises 739 residues: Poly(A) polymerase alpha (739 aa).

Low complexity predominate over residues 1–17; the sequence is MPFPVTTQGSQQTQPPQ. The tract at residues 1-23 is disordered; the sequence is MPFPVTTQGSQQTQPPQKHYGIT. Ser10 and Ser24 each carry phosphoserine. ATP is bound by residues 100-102, Thr109, 113-115, Asp167, Lys228, Tyr237, and 246-247; these read FGS, DID, and GV. Positions 113, 115, and 167 each coordinate Mg(2+). Residues Lys444, Lys445, Lys506, and Lys507 each participate in a glycyl lysine isopeptide (Lys-Gly) (interchain with G-Cter in SUMO) cross-link. Residues 490 to 507 carry the Nuclear localization signal 1 motif; it reads RKQLHQLLPSHVLQKKKK. Disordered regions lie at residues 501–565 and 580–700; these read VLQK…AVTA and QINS…TIQT. Residues 508 to 643 form a ser/Thr-rich region; sequence HSTEGVKLTP…AKIPNPIVGV (136 aa). Positions 518-534 are enriched in low complexity; the sequence is LNDSSLDLSMDSDNSMS. Over residues 535–557 the composition is skewed to polar residues; that stretch reads VPSPTSAMKTSPLNSSGSSQGRN. Position 537 is a phosphoserine; by MAPK (Ser537). A Phosphoserine modification is found at Ser558. Residues 583–594 are compositionally biased toward low complexity; the sequence is SSESSGGTSSES. Residues 595–604 are compositionally biased toward polar residues; that stretch reads IPQTATQPAI. Over residues 611-620 the composition is skewed to low complexity; sequence TVSRVVSSTR. Residues Lys635 and Lys644 each carry the N6-acetyllysine modification. The Nuclear localization signal 2 signature appears at 644–659; sequence KRTSSPHKEESPKKTK. 2 stretches are compositionally biased toward basic and acidic residues: residues 649–660 and 676–686; these read PHKEESPKKTKT and GHDKTETKEQL. The segment at 671-739 is required for interaction with NUDT21; that stretch reads CLALSGHDKT…KNSIKLRLNR (69 aa). Residues 688 to 700 are compositionally biased toward low complexity; that stretch reads TETSTTQSETIQT. Lys730 is subject to N6-acetyllysine; alternate. A Glycyl lysine isopeptide (Lys-Gly) (interchain with G-Cter in SUMO); alternate cross-link involves residue Lys730. The residue at position 732 (Ser732) is a Phosphoserine. The residue at position 734 (Lys734) is an N6-acetyllysine; alternate. Residue Lys734 forms a Glycyl lysine isopeptide (Lys-Gly) (interchain with G-Cter in SUMO); alternate linkage.

This sequence belongs to the poly(A) polymerase family. As to quaternary structure, monomer. Found in a complex with CPSF1, FIP1L1 and PAPOLA. Interacts with AHCYL1 and FIP1L1; the interaction with AHCYL1 seems to increase interaction with FIP1L1. Interacts with NUDT21; the interaction is diminished by acetylation. Interacts with KPNB1; the interaction promotes PAP nuclear import and is inhibited by acetylation of PAP. Mg(2+) serves as cofactor. Mn(2+) is required as a cofactor. In terms of processing, polysumoylated. Varying sumoylation depending on tissue- and cell-type. Highly sumoylated in bladder and NIH 3T3 cells. Sumoylation is required for nuclear localization and enhances PAP stability. Desumoylated by SENP1. Inhibits polymerase activity. Post-translationally, hyperphosphorylation on multiple CDK2 consensus and non-consensus sites in the C-terminal Ser/Thr-rich region represses PAP activity in late M-phase. Phosphorylation/dephosphorylation may regulate the interaction between PAP and CPSF. Acetylated in the C-terminus. Acetylation decreases interaction with NUDT21 and KPNB1, and inhibits nuclear localization through inhibiting binding to the importin alpha/beta complex.

The protein localises to the nucleus. It carries out the reaction RNA(n) + ATP = RNA(n)-3'-adenine ribonucleotide + diphosphate. Polymerase that creates the 3'-poly(A) tail of mRNA's. Also required for the endoribonucleolytic cleavage reaction at some polyadenylation sites. May acquire specificity through interaction with a cleavage and polyadenylation specificity factor (CPSF) at its C-terminus. The polypeptide is Poly(A) polymerase alpha (PAPOLA) (Bos taurus (Bovine)).